We begin with the raw amino-acid sequence, 212 residues long: uncharacterized protein (212 aa).

The first 20 residues, 1-20 (MKNLTIGAIFLIFFAVSAFA), serve as a signal peptide directing secretion.

Its subcellular location is the virion. This is an uncharacterized protein from Acanthamoeba polyphaga (Amoeba).